The chain runs to 1051 residues: Inactive tyrosine-protein kinase 7 (1051 aa).

The N-terminal stretch at 1-22 (MAALRALLLLLAVGAQAAIRFA) is a signal peptide. Ig-like C2-type domains are found at residues 23-105 (KEPY…ANAS), 115-204 (SVVL…DNFT), 213-298 (PQAV…KATL), 308-388 (PFSP…LSIT), 393-472 (PKWV…GSIE), 487-566 (PPPQ…ATVQ), and 573-661 (VTFK…AFLY). The Extracellular portion of the chain corresponds to 23 to 685 (KEPYSQDALH…SHTPYKMIQT (663 aa)). A disulfide bridge connects residues C40 and C88. A glycan (N-linked (GlcNAc...) asparagine) is linked at N103. A disulfide bridge links C137 with C187. N202, N255, and N264 each carry an N-linked (GlcNAc...) asparagine glycan. Cystine bridges form between C234-C282, C326-C372, C414-C462, C505-C551, and C594-C645. N-linked (GlcNAc...) asparagine glycans are attached at residues N444, N548, and N627. Residues 686–706 (IGLSVGAAVAYIIIVLGLMFY) form a helical membrane-spanning segment. At 707–1051 (CKKRRKAKRL…LGDSPADSKA (345 aa)) the chain is on the cytoplasmic side. Residues 777–1048 (LQTITTLGRG…AAALGDSPAD (272 aa)) form the Protein kinase; inactive domain.

This sequence belongs to the protein kinase superfamily. Tyr protein kinase family. Insulin receptor subfamily. Expressed in bone marrow, spleen, bursa, thymus and brain. Weakly expressed in fibroblasts. Also expressed in embryonic liver.

Its subcellular location is the membrane. Its function is as follows. Inactive tyrosine kinase involved in Wnt signaling. pathway. This chain is Inactive tyrosine-protein kinase 7 (PTK7), found in Gallus gallus (Chicken).